The primary structure comprises 495 residues: Ribitol 5-phosphate transferase FKRP (495 aa).

Residues 1–6 (MRLTRC) lie on the Cytoplasmic side of the membrane. A helical transmembrane segment spans residues 7–29 (QAALAAAITLNLLVLFYVSWLQH). Topologically, residues 30 to 495 (QPRNSRARGP…PALLSLTGSG (466 aa)) are lumenal. A disulfide bridge links C168 with C191. 2 N-linked (GlcNAc...) asparagine glycosylation sites follow: N172 and N209. 4 residues coordinate Zn(2+): C289, C296, C317, and C318. The tract at residues 289 to 318 (CNKETTRCFGTVVGDTPAYLYEERWTPPCC) is zinc finger loop. Residues G345, R352, 359–364 (WDYDVD), 437–438 (QD), and 480–482 (NPQ) contribute to the CDP-L-ribitol site. The Mg(2+) site is built by D360, D362, and D364.

It belongs to the LicD transferase family. In terms of assembly, homodimer; disulfide-linked. Tetramer. Forms a complex composed of FKRP, FKTN/fukutin, and RXYLT1/TMEM5. Also exists as large multimeric protein complexes. May interact with the dystrophin-glycoprotein complex (DGC). Mg(2+) serves as cofactor. Post-translationally, N-glycosylated. In terms of tissue distribution, expressed in the retina (at protein level). Expressed predominantly in skeletal muscle, placenta, and heart and relatively weakly in brain, lung, liver, kidney, and pancreas.

The protein resides in the golgi apparatus membrane. The protein localises to the secreted. Its subcellular location is the cell membrane. It localises to the sarcolemma. It is found in the rough endoplasmic reticulum. The protein resides in the cytoplasm. It carries out the reaction 3-O-[Rib-ol-P-3-beta-D-GalNAc-(1-&gt;3)-beta-D-GlcNAc-(1-&gt;4)-(O-6-P-alpha-D-Man)]-Thr-[protein] + CDP-L-ribitol = 3-O-[Rib-ol-P-Rib-ol-P-3-beta-D-GalNAc-(1-&gt;3)-beta-D-GlcNAc-(1-&gt;4)-(O-6-P-alpha-D-Man)]-Thr-[protein] + CMP + H(+). It participates in protein modification; protein glycosylation. Catalyzes the transfer of a ribitol 5-phosphate from CDP-L-ribitol to the ribitol 5-phosphate previously attached by FKTN/fukutin to the phosphorylated O-mannosyl trisaccharide (N-acetylgalactosamine-beta-3-N-acetylglucosamine-beta-4-(phosphate-6-)mannose), a carbohydrate structure present in alpha-dystroglycan (DAG1). This constitutes the second step in the formation of the ribose 5-phosphate tandem repeat which links the phosphorylated O-mannosyl trisaccharide to the ligand binding moiety composed of repeats of 3-xylosyl-alpha-1,3-glucuronic acid-beta-1. The polypeptide is Ribitol 5-phosphate transferase FKRP (Homo sapiens (Human)).